The primary structure comprises 85 residues: N.vectensis toxin 6 (85 aa).

A signal peptide spans 1-20 (MISFKTVIVCLFLWVVIIGA). Cystine bridges form between Cys-46–Cys-82, Cys-48–Cys-71, and Cys-64–Cys-83.

In terms of biological role, probable toxin. The polypeptide is N.vectensis toxin 6 (Nematostella vectensis (Starlet sea anemone)).